Reading from the N-terminus, the 462-residue chain is Zinc transporter 6-B (462 aa).

Residues 1–33 lie on the Cytoplasmic side of the membrane; the sequence is MGTIYLFRKTQRSLLGKLTQEFRLVTADRRSWK. A helical transmembrane segment spans residues 34–54; that stretch reads ILLFGAINVVCTGFLLTWCSS. The Extracellular portion of the chain corresponds to 55 to 64; the sequence is TNSMALTAYT. The chain crosses the membrane as a helical span at residues 65–85; the sequence is YLTIFDLFSLITSLISYWVMM. Over 86–98 the chain is Cytoplasmic; the sequence is KKPSPTYSFGFER. A helical transmembrane segment spans residues 99 to 119; that stretch reads LEVLAVFASTVLAQLGALFIL. Over 120 to 134 the chain is Extracellular; it reads KESAERFLEQPEIHT. Residues 135 to 155 traverse the membrane as a helical segment; sequence GRLLVGTFVALFFNLFTMLSI. Topologically, residues 156 to 200 are cytoplasmic; sequence RNKPFAYVSEAASTSWLQEHVADLSRSLCGVIPGLSSIFLPRMNP. The helical transmembrane segment at 201-221 threads the bilayer; sequence FVLIDIAGALALCITYMLIEI. The Extracellular portion of the chain corresponds to 222-223; it reads NN. The chain crosses the membrane as a helical span at residues 224–244; the sequence is YFAVDTASAIAIAVMTFGTMY. At 245–462 the chain is on the cytoplasmic side; the sequence is PMSVYSGKVL…TPGQFTQFRQ (218 aa).

Belongs to the cation diffusion facilitator (CDF) transporter (TC 2.A.4) family. SLC30A subfamily. Heterodimer with SLC30A5; form a functional zinc ion transmembrane transporter.

It localises to the golgi apparatus. The protein localises to the trans-Golgi network membrane. Its function is as follows. Has probably no intrinsic transporter activity but together with SLC30A5 forms a functional zinc ion:proton antiporter heterodimer, mediating zinc entry into the lumen of organelles along the secretory pathway. As part of that zinc ion:proton antiporter, contributes to zinc ion homeostasis within the early secretory pathway and regulates the activation and folding of enzymes like alkaline phosphatases and enzymes involved in phosphatidylinositol glycan anchor biosynthesis. This is Zinc transporter 6-B (slc30a6-b) from Xenopus laevis (African clawed frog).